A 156-amino-acid chain; its full sequence is Endoribonuclease YbeY (156 aa).

The Zn(2+) site is built by histidine 122, histidine 126, and histidine 132.

It belongs to the endoribonuclease YbeY family. It depends on Zn(2+) as a cofactor.

It localises to the cytoplasm. In terms of biological role, single strand-specific metallo-endoribonuclease involved in late-stage 70S ribosome quality control and in maturation of the 3' terminus of the 16S rRNA. The chain is Endoribonuclease YbeY from Bacillus cereus (strain B4264).